The chain runs to 438 residues: Dihydroorotase (438 aa).

Zn(2+)-binding residues include H58 and H60. Residues 60 to 62 and N92 each bind substrate; that span reads HLR. Zn(2+) is bound by residues D152, H179, and H232. N278 contacts substrate. D305 serves as a coordination point for Zn(2+). Residue D305 is part of the active site. Residues H309 and 323 to 324 contribute to the substrate site; that span reads FG.

Belongs to the metallo-dependent hydrolases superfamily. DHOase family. Class I DHOase subfamily. The cofactor is Zn(2+).

It catalyses the reaction (S)-dihydroorotate + H2O = N-carbamoyl-L-aspartate + H(+). Its pathway is pyrimidine metabolism; UMP biosynthesis via de novo pathway; (S)-dihydroorotate from bicarbonate: step 3/3. In terms of biological role, catalyzes the reversible cyclization of carbamoyl aspartate to dihydroorotate. The protein is Dihydroorotase of Leifsonia xyli subsp. xyli (strain CTCB07).